The following is a 569-amino-acid chain: Membrane protein insertase YidC (569 aa).

Helical transmembrane passes span 7 to 24 (VLWVIFSFSLLMLWDNYN), 219 to 239 (GSALGGGSMFMASAFTGPAIY), 299 to 319 (LYAVGTILPMGTVAPGATASM), 340 to 360 (FELVKDYGWLTIIAKPIFWLM), 366 to 386 (ILGNWGWTIIVLTIVIKLAFF), 436 to 456 (IGGCFPMLVQIPVFISLYWVL), 485 to 505 (IGTFHLTIGILPILMAISMFI), and 526 to 546 (PIAFSVMFFFFPAGLVLYWVV).

The protein belongs to the OXA1/ALB3/YidC family. Type 1 subfamily. In terms of assembly, interacts with the Sec translocase complex via SecD. Specifically interacts with transmembrane segments of nascent integral membrane proteins during membrane integration.

It is found in the cell inner membrane. Functionally, required for the insertion and/or proper folding and/or complex formation of integral membrane proteins into the membrane. Involved in integration of membrane proteins that insert both dependently and independently of the Sec translocase complex, as well as at least some lipoproteins. Aids folding of multispanning membrane proteins. This is Membrane protein insertase YidC from Herminiimonas arsenicoxydans.